The chain runs to 360 residues: Photosystem II protein D1 (360 aa).

The next 3 helical transmembrane spans lie at 29-46, 118-133, and 142-156; these read YIGW…TATS, HFLL…EWEL, and WIFV…AASA. His118 is a chlorophyll a binding site. Residue Tyr126 coordinates pheophytin a. Asp170 and Glu189 together coordinate [CaMn4O5] cluster. The chain crosses the membrane as a helical span at residues 197–218; the sequence is FHMAGVAGVFGGSLFSAMHGSL. His198 serves as a coordination point for chlorophyll a. A quinone contacts are provided by residues His215 and 264–265; that span reads SF. Fe cation is bound at residue His215. Residue His272 participates in Fe cation binding. Residues 274 to 288 form a helical membrane-spanning segment; it reads FLAAWPVVGIWLTAL. [CaMn4O5] cluster-binding residues include His332, Glu333, Asp342, and Ala344. Positions 345-360 are excised as a propeptide; that stretch reads SNEVLPVAVNAPAVNG.

It belongs to the reaction center PufL/M/PsbA/D family. As to quaternary structure, PSII is composed of 1 copy each of membrane proteins PsbA, PsbB, PsbC, PsbD, PsbE, PsbF, PsbH, PsbI, PsbJ, PsbK, PsbL, PsbM, PsbT, PsbX, PsbY, PsbZ, Psb30/Ycf12, at least 3 peripheral proteins of the oxygen-evolving complex and a large number of cofactors. It forms dimeric complexes. The D1/D2 heterodimer binds P680, chlorophylls that are the primary electron donor of PSII, and subsequent electron acceptors. It shares a non-heme iron and each subunit binds pheophytin, quinone, additional chlorophylls, carotenoids and lipids. D1 provides most of the ligands for the Mn4-Ca-O5 cluster of the oxygen-evolving complex (OEC). There is also a Cl(-1) ion associated with D1 and D2, which is required for oxygen evolution. The PSII complex binds additional chlorophylls, carotenoids and specific lipids. is required as a cofactor. Tyr-161 forms a radical intermediate that is referred to as redox-active TyrZ, YZ or Y-Z. In terms of processing, C-terminally processed by CTPA; processing is essential to allow assembly of the oxygen-evolving complex and thus photosynthetic growth.

It is found in the plastid. The protein resides in the chloroplast thylakoid membrane. The catalysed reaction is 2 a plastoquinone + 4 hnu + 2 H2O = 2 a plastoquinol + O2. In terms of biological role, photosystem II (PSII) is a light-driven water:plastoquinone oxidoreductase that uses light energy to abstract electrons from H(2)O, generating O(2) and a proton gradient subsequently used for ATP formation. It consists of a core antenna complex that captures photons, and an electron transfer chain that converts photonic excitation into a charge separation. The D1/D2 (PsbA/PsbD) reaction center heterodimer binds P680, the primary electron donor of PSII as well as several subsequent electron acceptors. The protein is Photosystem II protein D1 of Heterosigma akashiwo (Chromophytic alga).